The following is a 357-amino-acid chain: 3-isopropylmalate dehydrogenase, chloroplastic (357 aa).

The N-terminal 29 residues, 1–29 (MALQIAKRLLRCRADSVASSVRFFDRTFT), are a transit peptide targeting the chloroplast. Residues arginine 120, arginine 130, arginine 151, and aspartate 238 each coordinate substrate. Residues aspartate 238, aspartate 262, and aspartate 266 each coordinate Mg(2+). 296 to 308 (GSAPDIAGKNLAN) is a binding site for NAD(+).

The protein belongs to the isocitrate and isopropylmalate dehydrogenases family. Homodimer. The cofactor is Mg(2+). Requires Mn(2+) as cofactor.

It localises to the plastid. The protein localises to the chloroplast. It carries out the reaction (2R,3S)-3-isopropylmalate + NAD(+) = 4-methyl-2-oxopentanoate + CO2 + NADH. Its pathway is amino-acid biosynthesis; L-leucine biosynthesis; L-leucine from 3-methyl-2-oxobutanoate: step 3/4. Its function is as follows. Catalyzes the oxidation of 3-carboxy-2-hydroxy-4-methylpentanoate (3-isopropylmalate) to 3-carboxy-4-methyl-2-oxopentanoate. The product decarboxylates to 4-methyl-2 oxopentanoate. This chain is 3-isopropylmalate dehydrogenase, chloroplastic, found in Solanum tuberosum (Potato).